The primary structure comprises 69 residues: DNA-directed RNA polymerase subunit epsilon (69 aa).

The protein belongs to the RNA polymerase subunit epsilon family. In terms of assembly, monomer. RNAP is composed of a core of 2 alpha, a beta and a beta' subunit. The core is associated with a delta subunit, and at least one of epsilon or omega. When a sigma factor is associated with the core the holoenzyme is formed, which can initiate transcription.

It is found in the cytoplasm. Its subcellular location is the nucleoid. The enzyme catalyses RNA(n) + a ribonucleoside 5'-triphosphate = RNA(n+1) + diphosphate. Its function is as follows. A non-essential component of RNA polymerase (RNAP). Has a similar structure to bacteriophage T7 protein Gp2 (AC P03704), which is known to bind to RNAP in the DNA binding-cleft. Unlike Gp2 however, this protein does not inhibit transcription initiation. In vitro reconstitution experiments show this subunit is dispensible. The polypeptide is DNA-directed RNA polymerase subunit epsilon (Bacillus subtilis (strain 168)).